The following is a 72-amino-acid chain: MKTMKNSAAREAFKGANHPAGMVSEEELKALVGGNDVNPETTPATTSSWTCITAGVTVSASLCPTTKCTSRC.

The interval 1-21 (MKTMKNSAAREAFKGANHPAG) is disordered. The propeptide occupies 1–40 (MKTMKNSAAREAFKGANHPAGMVSEEELKALVGGNDVNPE). Thr-41 is subject to 2-oxobutanoic acid. 3 positions are modified to (Z)-2,3-didehydrobutyrine: Thr-42, Thr-45, and Thr-46. The lanthionine (Ser-Cys) cross-link spans 47 to 51 (SSWTC). Ser-48 is subject to 2,3-didehydroalanine (Ser). 2 positions are modified to (Z)-2,3-didehydrobutyrine: Thr-53 and Thr-57. The lanthionine (Ser-Cys) cross-link spans 59–63 (SASLC). 2 cross-links (beta-methyllanthionine (Thr-Cys)) span residues 65–68 (TTKC) and 69–72 (TSRC). Thr-66 bears the (Z)-2,3-didehydrobutyrine mark.

In terms of processing, maturation of lantibiotics involves the enzymatic conversion of Thr, and Ser into dehydrated AA and the formation of thioether bonds with cysteine. This is followed by membrane translocation and cleavage of the modified precursor. The 2,3-didehydrobutyrines are determined to be the Z-isomers.

The protein localises to the secreted. Lanthionine-containing peptide antibiotic (lantibiotic) active on Gram-positive bacteria. The bactericidal activity of lantibiotics is based on depolarization of energized bacterial cytoplasmic membranes, initiated by the formation of aqueous transmembrane pores. When present individually, LchA2 exhibits activity towards B.subtilis L1 (IC(50)=30 uM), Rhodococcus sp. SS2 (IC(50)=16.6 uM), M.luteus B1314 (IC(50)=2.6 uM), B.megaterium VKM41 (IC(50)=2 uM), S.aureus 209p (IC(50)=20 uM), B.pumilus 2001, B.globigii I, B.amyloliquefaciens I, M.smegmatis 1171 and M.phlei 1291. However, when combined with LchA1, it displays much stronger activity against B.subtilis L1 (IC(50)=0.64 uM), Rhodococcus sp. SS2 (IC(50)=0.64 uM), M.luteus B1314 (IC(50)=0.09 uM), B.megaterium VKM41 (IC(50)=0.12 uM) and S.aureus 209p (IC(50)=0.64 uM). The activity of the combined LchA1 and LchA2 peptides is strongest at a molar ratio of 1. Even when applied at 17-fold concentration of the highest IC(50) values for Gram-positive bacteria, neither the individual nor the combined peptides display activity against Gram-negative bacteria P.aeruginosa PAO1, P.putida I-97 or E.coli C600. The polypeptide is Lantibiotic lichenicidin VK21 A2 (Bacillus licheniformis).